Consider the following 508-residue polypeptide: 4-trimethylaminobutyraldehyde dehydrogenase A (508 aa).

NAD(+)-binding positions include Lys194 and 246–250 (GSVPT). The active-site Proton acceptor is the Glu268. Residue Cys302 is the Nucleophile of the active site. Glu405 lines the NAD(+) pocket.

Belongs to the aldehyde dehydrogenase family. In terms of assembly, homotetramer.

The protein localises to the cytoplasm. The protein resides in the cytosol. The catalysed reaction is 4-(trimethylamino)butanal + NAD(+) + H2O = 4-(trimethylamino)butanoate + NADH + 2 H(+). The enzyme catalyses an aldehyde + NAD(+) + H2O = a carboxylate + NADH + 2 H(+). The protein operates within amine and polyamine biosynthesis; carnitine biosynthesis. In terms of biological role, converts gamma-trimethylaminobutyraldehyde into gamma-butyrobetaine with high efficiency (in vitro). Can catalyze the irreversible oxidation of a broad range of aldehydes to the corresponding acids in an NAD-dependent reaction, but with low efficiency. This Danio rerio (Zebrafish) protein is 4-trimethylaminobutyraldehyde dehydrogenase A (aldh9a1a).